A 432-amino-acid polypeptide reads, in one-letter code: MKKIASFCSAAVLIASSFLLNNTVQAQQILDRVVVVVDDGVVLQSQIDQLIQQVKNGQNFNSSNAPSDEVLETQAIERLILQEIQLQMANRMGIEIDDNQLEQAINEIANNQDLTTAELRENMVSSGMSWAAYRENIRNELVIQQVQRAAVQQRVSITPQEINNLVKLIESNQEVQTEYRLAQILISADSNSSQAELEKAKERANTVLNLLDKGSDFADLAVRSSSGSAALDGGDLGWMTVNGMPTLFAEAVDGKSVGDVVGPIRSGIGFHILKVQDKRGEQTVEVQEVKARHILIKPSVILSDNKAKEMLNKYREQIASGEKTFAELAREHSADPGSASRGGDLGWARPNKYAPEFKQKVESIEQDTISEPFSTQFGWHIVEVTGRRTLDATEENKQERAYQMLFSRKFREELDNWQQEIRDQAFIRRVAE.

A signal peptide spans 1–26 (MKKIASFCSAAVLIASSFLLNNTVQA). 2 PpiC domains span residues 176-277 (QTEY…KVQD) and 286-386 (VQEV…EVTG).

The protein localises to the periplasm. The catalysed reaction is [protein]-peptidylproline (omega=180) = [protein]-peptidylproline (omega=0). Its function is as follows. Chaperone involved in the correct folding and assembly of outer membrane proteins. Recognizes specific patterns of aromatic residues and the orientation of their side chains, which are found more frequently in integral outer membrane proteins. May act in both early periplasmic and late outer membrane-associated steps of protein maturation. The chain is Chaperone SurA from Idiomarina loihiensis (strain ATCC BAA-735 / DSM 15497 / L2-TR).